The primary structure comprises 298 residues: PYK10-binding protein 1 (298 aa).

Ala2 is modified (N-acetylalanine). 2 Jacalin-type lectin domains span residues 2-142 and 152-295; these read AQKV…YFAP and AKQL…HVRP. Ser20 is modified (phosphoserine).

Belongs to the jacalin lectin family. Component of the PYK10 complex, at least composed of PYK10/BGLU23, BGLU21, BGLU22, JAL22, JAL23, PBP1/JAL30, PBP2/JAL31, JAL32, JAL33, JAL34, JAL35, GLL22 and GLL23. As to expression, expressed exclusively in roots.

It is found in the cytoplasm. Inhibitor-type lectin that may regulate the correct polymerization of BGLU23/PYK10 upon tissue damage. Activates BGLU21, BGLU22 and BGLU23. The protein is PYK10-binding protein 1 (PBP1) of Arabidopsis thaliana (Mouse-ear cress).